We begin with the raw amino-acid sequence, 260 residues long: MGRPPPCAIQTWILLFLLMGAWAGLTRAQGSKILEGQECKPHSQPWQTALFQGERLVCGGVLVGDRWVLTAAHCKKDKYSVRLGDHSLQKRDEPEQEIQVARSIQHPCFNSSNPEDHSHDIMLIRLQNSANLGDKVKPIELANLCPKVGQKCIISGWGTVTSPQENFPNTLNCAEVKIYSQNKCERAYPGKITEGMVCAGSSNGADTCQGDSGGPLVCNGVLQGITTWGSDPCGKPEKPGVYTKICRYTNWIKKTMGKRD.

Residues 1 to 28 form the signal peptide; that stretch reads MGRPPPCAIQTWILLFLLMGAWAGLTRA. A propeptide spanning residues 29–32 is cleaved from the precursor; the sequence is QGSK. A Peptidase S1 domain is found at 33–257; sequence ILEGQECKPH…YTNWIKKTMG (225 aa). 6 cysteine pairs are disulfide-bonded: cysteine 39–cysteine 173, cysteine 58–cysteine 74, cysteine 145–cysteine 246, cysteine 152–cysteine 218, cysteine 184–cysteine 198, and cysteine 208–cysteine 233. The active-site Charge relay system is histidine 73. N-linked (GlcNAc...) asparagine glycosylation is present at asparagine 110. Catalysis depends on aspartate 120, which acts as the Charge relay system. Serine 212 functions as the Charge relay system in the catalytic mechanism.

It belongs to the peptidase S1 family. Kallikrein subfamily. In terms of assembly, interacts with SPINK9. As to expression, restricted to hippocampus.

It is found in the secreted. The protein localises to the cytoplasm. It carries out the reaction Cleavage of amide substrates following the basic amino acids Arg or Lys at the P1 position, with a preference for Arg over Lys.. Functionally, serine protease which is capable of degrading a number of proteins such as casein, fibrinogen, kininogen, fibronectin and collagen type IV. Also cleaves L1CAM in response to increased neural activity. Induces neurite outgrowth and fasciculation of cultured hippocampal neurons. Plays a role in the formation and maturation of orphan and small synaptic boutons in the Schaffer-collateral pathway, regulates Schaffer-collateral long-term potentiation in the hippocampus and is required for memory acquisition and synaptic plasticity. Involved in skin desquamation and keratinocyte proliferation. Plays a role in the secondary phase of pathogenesis following spinal cord injury. This Rattus norvegicus (Rat) protein is Kallikrein-8 (Klk8).